A 396-amino-acid chain; its full sequence is MTGFFTFLSFSLAALSVTNAAHILSVPKGAEVVPNGYIVVMKDDTSQQDFSSHRVWISSIHHNKTRRGLDGAGVKQTYDFDHLRGYSGIFDEDTIKDISNDPKVAFVEPDAIISQHVVVQQRKAPWGLSRLSNRRGGRNYVFDSSAGSGVWAYVVDSGVDIRHSEFQGRAVWGSNLVDNKNSDGTGHGTHVAGTIAGKTYGIAKKAKVVAVKVLNSEGKGPTSGIIAGINWSIRHARKHGMLHKSVLNMSLGGTYSAGLNHATAQAIKAGMFVSVSAGNDNINSNGNSPASERSVCTIAASTENDGKASFSNWGPAVDLYAPGHNILSARPGGGSQTMSGTSMAAPHAAGVAAYLIAKEGIPGNRACLRLKQLSQPTIRNPGPDTTSRLLYNGSGR.

Positions 1–20 (MTGFFTFLSFSLAALSVTNA) are cleaved as a signal peptide. Residues 21-116 (AHILSVPKGA…VEPDAIISQH (96 aa)) constitute a propeptide that is removed on maturation. Positions 37 to 113 (YIVVMKDDTS…VAFVEPDAII (77 aa)) constitute an Inhibitor I9 domain. N-linked (GlcNAc...) asparagine glycosylation is present at Asn63. Positions 125–396 (PWGLSRLSNR…SRLLYNGSGR (272 aa)) constitute a Peptidase S8 domain. Active-site charge relay system residues include Asp156 and His187. 2 N-linked (GlcNAc...) asparagine glycosylation sites follow: Asn230 and Asn248. Catalysis depends on Ser342, which acts as the Charge relay system. A compositionally biased stretch (polar residues) spans 376-389 (PTIRNPGPDTTSRL). The interval 376–396 (PTIRNPGPDTTSRLLYNGSGR) is disordered. Residue Asn392 is glycosylated (N-linked (GlcNAc...) asparagine).

It belongs to the peptidase S8 family.

Its subcellular location is the secreted. Its function is as follows. Secreted subtilisin-like serine protease with keratinolytic activity that contributes to pathogenicity. This is Subtilisin-like protease 5 (SUB5) from Trichophyton tonsurans (Scalp ringworm fungus).